A 353-amino-acid chain; its full sequence is Phosphoribosylformylglycinamidine cyclo-ligase (353 aa).

This sequence belongs to the AIR synthase family.

It localises to the cytoplasm. It carries out the reaction 2-formamido-N(1)-(5-O-phospho-beta-D-ribosyl)acetamidine + ATP = 5-amino-1-(5-phospho-beta-D-ribosyl)imidazole + ADP + phosphate + H(+). It functions in the pathway purine metabolism; IMP biosynthesis via de novo pathway; 5-amino-1-(5-phospho-D-ribosyl)imidazole from N(2)-formyl-N(1)-(5-phospho-D-ribosyl)glycinamide: step 2/2. The sequence is that of Phosphoribosylformylglycinamidine cyclo-ligase from Symbiobacterium thermophilum (strain DSM 24528 / JCM 14929 / IAM 14863 / T).